Consider the following 138-residue polypeptide: Protein FAM136A (138 aa).

Ala2 carries the N-acetylalanine modification. Residues Thr124 and Thr126 each carry the phosphothreonine modification.

The protein belongs to the FAM136 family.

The chain is Protein FAM136A (Fam136a) from Rattus norvegicus (Rat).